Consider the following 366-residue polypeptide: GTP cyclohydrolase 1 type 2 homolog (366 aa).

Residues His64, His65, Asp102, His326, and Glu329 each contribute to the Zn(2+) site.

The protein belongs to the GTP cyclohydrolase I type 2/NIF3 family. Homohexamer.

In Staphylococcus aureus (strain COL), this protein is GTP cyclohydrolase 1 type 2 homolog.